The chain runs to 93 residues: Neutrophil cationic peptide 1 type A (93 aa).

The N-terminal stretch at 1–19 (MRTVPLFAACLLLTLMAQA) is a signal peptide. Residues 20–62 (EPLPRAADHSDTKMKGDREDHVAVISFWEEESTSLEDAGAGAG) constitute a propeptide that is removed on maturation. 3 disulfide bridges follow: cysteine 65–cysteine 93, cysteine 67–cysteine 82, and cysteine 72–cysteine 92.

It belongs to the alpha-defensin family.

The protein resides in the secreted. Functionally, has antibiotic, anti-fungi and antiviral activity. The chain is Neutrophil cationic peptide 1 type A from Cavia porcellus (Guinea pig).